The sequence spans 403 residues: Esterase LipC (403 aa).

Active-site residues include Ser237, Asp334, and His367.

It belongs to the 'GDXG' lipolytic enzyme family.

The protein resides in the cell surface. It localises to the secreted. Its subcellular location is the cell wall. It is found in the capsule. It carries out the reaction a fatty acid ester + H2O = an aliphatic alcohol + a fatty acid + H(+). It catalyses the reaction a butanoate ester + H2O = an aliphatic alcohol + butanoate + H(+). The enzyme catalyses a hexanoate ester + H2O = an aliphatic alcohol + hexanoate + H(+). The catalysed reaction is an acetyl ester + H2O = an aliphatic alcohol + acetate + H(+). It carries out the reaction an octanoate ester + H2O = an aliphatic alcohol + octanoate + H(+). It catalyses the reaction decanoate ester + H2O = decanoate + an aliphatic alcohol + H(+). In terms of biological role, esterase that can hydrolyze short-chain esters with the carbon chain containing 2 to 10 carbon atoms. Does not have lipase activity. Is highly immunogenic and elicits strong humoral immune responses in both HIV-negative (HIV-) and HIV-positive (HIV+) tuberculosis (TB) patients. Also elicits pro-inflammatory cytokine and chemokine responses from macrophages and pulmonary epithelial cells. May participate in the progression of active tuberculosis both by contributing to the utilization of lipid substrates for bacterial growth and replication, and by modulating immune responses. The polypeptide is Esterase LipC (Mycobacterium tuberculosis (strain ATCC 25618 / H37Rv)).